Reading from the N-terminus, the 177-residue chain is Large ribosomal subunit protein uL6 (177 aa).

It belongs to the universal ribosomal protein uL6 family. In terms of assembly, part of the 50S ribosomal subunit.

This protein binds to the 23S rRNA, and is important in its secondary structure. It is located near the subunit interface in the base of the L7/L12 stalk, and near the tRNA binding site of the peptidyltransferase center. This is Large ribosomal subunit protein uL6 from Rhizobium meliloti (strain 1021) (Ensifer meliloti).